Reading from the N-terminus, the 865-residue chain is cGMP-specific 3',5'-cyclic phosphodiesterase (865 aa).

Ser92 is modified (phosphoserine). GAF domains follow at residues 154 to 304 (DVTA…GIVL) and 336 to 493 (SLEV…GLGI). One can recognise a PDEase domain in the interval 526–850 (ETRELQSLAA…QKWQALAEQQ (325 aa)). His603 (proton donor) is an active-site residue. Residues His607, His643, Asp644, and Asp754 each contribute to the Zn(2+) site. Mg(2+) is bound at residue Asp644. Gln807 is a binding site for 3',5'-cyclic GMP.

Belongs to the cyclic nucleotide phosphodiesterase family. Zn(2+) is required as a cofactor. The cofactor is Mg(2+). In terms of processing, phosphorylation is regulated by binding of cGMP to the two allosteric sites. Phosphorylation by PRKG1 leads to its activation.

The catalysed reaction is 3',5'-cyclic GMP + H2O = GMP + H(+). It functions in the pathway purine metabolism; 3',5'-cyclic GMP degradation; GMP from 3',5'-cyclic GMP: step 1/1. With respect to regulation, most potently inhibited by zaprinast and dipyridamole. Its function is as follows. Plays a role in signal transduction by regulating the intracellular concentration of cyclic nucleotides. This phosphodiesterase catalyzes the specific hydrolysis of cGMP to 5'-GMP. Specifically regulates nitric-oxide-generated cGMP. This chain is cGMP-specific 3',5'-cyclic phosphodiesterase (PDE5A), found in Bos taurus (Bovine).